A 511-amino-acid chain; its full sequence is MVLLAAAVCTKAGKAIVSRQFVEMTRTRIEGLLAAFPKLMNTGKQHTFVETESVRYVYQPMEKLYMVLITTKNSNILEDLETLRLFSRVIPEYCRALEENEISEHCFDLIFAFDEIVALGYRENVNLAQIRTFTEMDSHEEKVFRAVRETQEREAKAEMRRKAKELQQARRDAERQGKKAPGFGGFGSSAVSGGSTAAMITETIIETDKPKVAPAPARPSGPSKALKLGAKGKEVDNFVDKLKSEGETIMSSNMGKRTSEAAKVHAPPINMESVHMKIEEKITLTCGRDGGLQNMELHGMIMLRISDDKFGRIRLHVENEDKKGVQLQTHPNVDKKLFTAESLIGLKNPEKSFPVNSDVGVLKWRLQTTEESFIPLTINCWPSESGNGCDVNIEYELQEDNLELNDVVITIPLPSGVGAPVIGEIDGEYRHDSRRNTLEWCLPVIDAKNKSGSLEFSIPGQPNDFFPVQVSFISKKNYCNIQVTKVTQVDGNSPVRFSTETTFLVDKYEIL.

The span at 168-177 shows a compositional bias: basic and acidic residues; that stretch reads QARRDAERQG. The interval 168-188 is disordered; that stretch reads QARRDAERQGKKAPGFGGFGS. Residue serine 223 is modified to Phosphoserine. N6-acetyllysine is present on residues lysine 233 and lysine 241. A Phosphoserine modification is found at serine 244. In terms of domain architecture, MHD spans 271-511; that stretch reads MESVHMKIEE…TFLVDKYEIL (241 aa). Residues lysine 309 and lysine 351 each carry the N6-acetyllysine modification. Serine 493 is modified (phosphoserine).

This sequence belongs to the adaptor complexes medium subunit family. Delta-COP subfamily. As to quaternary structure, oligomeric complex that consists of at least the alpha, beta, beta', gamma, delta, epsilon and zeta subunits.

It localises to the cytoplasm. It is found in the golgi apparatus membrane. The protein resides in the cytoplasmic vesicle. Its subcellular location is the COPI-coated vesicle membrane. The coatomer is a cytosolic protein complex that binds to dilysine motifs and reversibly associates with Golgi non-clathrin-coated vesicles, which further mediate biosynthetic protein transport from the ER, via the Golgi up to the trans Golgi network. Coatomer complex is required for budding from Golgi membranes, and is essential for the retrograde Golgi-to-ER transport of dilysine-tagged proteins. In mammals, the coatomer can only be recruited by membranes associated to ADP-ribosylation factors (ARFs), which are small GTP-binding proteins; the complex also influences the Golgi structural integrity, as well as the processing, activity, and endocytic recycling of LDL receptors. This is Coatomer subunit delta (Arcn1) from Rattus norvegicus (Rat).